The primary structure comprises 416 residues: RNA polymerase sigma-C factor (416 aa).

A Polymerase core binding motif is present at residues 205–218; the sequence is DLVQEGTLGLERAV. The H-T-H motif DNA-binding region spans 374–393; the sequence is LAEIGRALDLSRERVRQIES.

The protein belongs to the sigma-70 factor family.

Functionally, sigma factors are initiation factors that promote the attachment of RNA polymerase to specific initiation sites and are then released. This Nostoc sp. (strain PCC 7120 / SAG 25.82 / UTEX 2576) protein is RNA polymerase sigma-C factor (sigC).